We begin with the raw amino-acid sequence, 91 residues long: Probable Fe(2+)-trafficking protein (91 aa).

It belongs to the Fe(2+)-trafficking protein family.

Its function is as follows. Could be a mediator in iron transactions between iron acquisition and iron-requiring processes, such as synthesis and/or repair of Fe-S clusters in biosynthetic enzymes. The sequence is that of Probable Fe(2+)-trafficking protein from Burkholderia mallei (strain NCTC 10247).